Reading from the N-terminus, the 620-residue chain is Glutathione-regulated potassium-efflux system protein KefC (620 aa).

The next 12 membrane-spanning stretches (helical) occupy residues 4-24 (HTLI…PIAV), 26-46 (LGLG…PWGL), 54-74 (SILH…GLEL), 90-110 (GALQ…LLGL), 114-134 (VAEL…MQAM), 149-169 (FAVL…IPLL), 178-198 (MGAF…VVLL), 218-238 (VFSA…EEVG), 270-290 (GLLL…GTLL), 294-314 (LRIV…LWLI), 327-347 (WFAV…GTAQ), and 359-379 (SLTL…VILN). The region spanning 399–518 (QPRVIIAGFG…AGVEKPERET (120 aa)) is the RCK N-terminal domain. A disordered region spans residues 597–620 (GWQGTEEGKHTGNMADEPETKPSS).

This sequence belongs to the monovalent cation:proton antiporter 2 (CPA2) transporter (TC 2.A.37) family. KefC subfamily. In terms of assembly, homodimer. Interacts with the regulatory subunit KefF.

It is found in the cell inner membrane. Its function is as follows. Pore-forming subunit of a potassium efflux system that confers protection against electrophiles. Catalyzes K(+)/H(+) antiport. The protein is Glutathione-regulated potassium-efflux system protein KefC of Shigella sonnei (strain Ss046).